A 79-amino-acid chain; its full sequence is Exodeoxyribonuclease 7 small subunit (79 aa).

This sequence belongs to the XseB family. In terms of assembly, heterooligomer composed of large and small subunits.

The protein localises to the cytoplasm. The catalysed reaction is Exonucleolytic cleavage in either 5'- to 3'- or 3'- to 5'-direction to yield nucleoside 5'-phosphates.. Functionally, bidirectionally degrades single-stranded DNA into large acid-insoluble oligonucleotides, which are then degraded further into small acid-soluble oligonucleotides. The chain is Exodeoxyribonuclease 7 small subunit from Shouchella clausii (strain KSM-K16) (Alkalihalobacillus clausii).